The chain runs to 146 residues: MKLHELKPAEGSRKSRKRIGRGTGSGLGRNAGKGEKGQKARAGGGVRIGFEGGQMPLYRRVPKRGFTNIFAKQYSELNVERLNIFEDGTEITPELLIEKRMIRKSKDGLKILGNGELQKKLTVKAVKFTKAAAQKIEAAGGKVEVI.

Positions 1-13 (MKLHELKPAEGSR) are enriched in basic and acidic residues. The segment at 1 to 47 (MKLHELKPAEGSRKSRKRIGRGTGSGLGRNAGKGEKGQKARAGGGVR) is disordered. The span at 21 to 31 (RGTGSGLGRNA) shows a compositional bias: gly residues.

The protein belongs to the universal ribosomal protein uL15 family. Part of the 50S ribosomal subunit.

In terms of biological role, binds to the 23S rRNA. The sequence is that of Large ribosomal subunit protein uL15 from Clostridium kluyveri (strain NBRC 12016).